Consider the following 308-residue polypeptide: General transcription factor IIH subunit 3 (308 aa).

The C4-type zinc finger occupies 268 to 285; it reads CSVCLSIFCNFSPICTTC.

Belongs to the TFB4 family. In terms of assembly, part of a TFIID-containing RNA polymerase II pre-initiation complex that is composed of TBP and at least GTF2A1, GTF2A2, GTF2E1, GTF2E2, GTF2F1, GTF2H2, GTF2H3, GTF2H4, GTF2H5, GTF2B, TCEA1, ERCC2, ERCC3, TAF1, TAF2, TAF3, TAF4, TAF5, TAF6, TAF7, TAF8, TAF9, TAF10, TAF11, TAF12 and TAF13. Component of the 7-subunit TFIIH core complex composed of XPB/ERCC3, XPD/ERCC2, GTF2H1, GTF2H2, GTF2H3, GTF2H4 and GTF2H5, which is active in NER. The core complex associates with the 3-subunit CDK-activating kinase (CAK) module composed of CCNH/cyclin H, CDK7 and MNAT1 to form the 10-subunit holoenzyme (holo-TFIIH) active in transcription. Interacts with RARA; the interaction requires prior phosphorylation of RARA on 'Ser-369' which then enhances interaction of RARA with CDK7.

The protein resides in the nucleus. Its function is as follows. Component of the general transcription and DNA repair factor IIH (TFIIH) core complex, which is involved in general and transcription-coupled nucleotide excision repair (NER) of damaged DNA and, when complexed to CAK, in RNA transcription by RNA polymerase II. In NER, TFIIH acts by opening DNA around the lesion to allow the excision of the damaged oligonucleotide and its replacement by a new DNA fragment. In transcription, TFIIH has an essential role in transcription initiation. When the pre-initiation complex (PIC) has been established, TFIIH is required for promoter opening and promoter escape. Phosphorylation of the C-terminal tail (CTD) of the largest subunit of RNA polymerase II by the kinase module CAK controls the initiation of transcription. In Homo sapiens (Human), this protein is General transcription factor IIH subunit 3 (GTF2H3).